Reading from the N-terminus, the 217-residue chain is Probable transaldolase (217 aa).

Lysine 85 serves as the catalytic Schiff-base intermediate with substrate.

The protein belongs to the transaldolase family. Type 3B subfamily.

The protein localises to the cytoplasm. It catalyses the reaction D-sedoheptulose 7-phosphate + D-glyceraldehyde 3-phosphate = D-erythrose 4-phosphate + beta-D-fructose 6-phosphate. It participates in carbohydrate degradation; pentose phosphate pathway; D-glyceraldehyde 3-phosphate and beta-D-fructose 6-phosphate from D-ribose 5-phosphate and D-xylulose 5-phosphate (non-oxidative stage): step 2/3. In terms of biological role, transaldolase is important for the balance of metabolites in the pentose-phosphate pathway. This chain is Probable transaldolase, found in Brachyspira hyodysenteriae (strain ATCC 49526 / WA1).